A 50-amino-acid polypeptide reads, in one-letter code: MAERVIITLACSVCKNRNYYFDRAKNHEGKLALKKFCKNCGKRTDHKETK.

The protein belongs to the bacterial ribosomal protein bL33 family.

The polypeptide is Large ribosomal subunit protein bL33 (Endomicrobium trichonymphae).